Consider the following 230-residue polypeptide: Fibronectin type III domain-containing protein 4 (230 aa).

Positions 1 to 40 (MPGCLPADSVGTMASLMPLSPYLSPTVLLLVSCDLGFVRA) are cleaved as a signal peptide. Residues 41–163 (DRPPSPVNVT…GLDGERPLQT (123 aa)) lie on the Extracellular side of the membrane. In terms of domain architecture, Fibronectin type-III spans 43–136 (PPSPVNVTVT…PRVHFRTLKG (94 aa)). Asn-48 and Asn-143 each carry an N-linked (GlcNAc...) asparagine glycan. Residues 118–156 (GLRGESPPGPRVHFRTLKGSDRLPSNSSSPGDITVEGLD) are disordered. Residues 164 to 184 (GEVVIIVVVLLMWAAVIGLFC) form a helical membrane-spanning segment. The Cytoplasmic portion of the chain corresponds to 185 to 230 (RQYDIIKDNDSNNNPKEKGKGPEQSPQGRPVGTRQKKSPSINTIDV). Over residues 193–205 (NDSNNNPKEKGKG) the composition is skewed to basic and acidic residues. Residues 193–230 (NDSNNNPKEKGKGPEQSPQGRPVGTRQKKSPSINTIDV) form a disordered region.

Its subcellular location is the membrane. The protein resides in the secreted. Functionally, has anti-inflammatory properties. In the colon, acts on macrophages to down-regulate inflammation. May suppress osteoclastogenesis and mature osteoclast resorptive function. In white adipose tissue, decreases local inflammation, via interaction with GPR116. Also required for proper systemic glucose tolerance, specifically sensitizing white adipocytes to insulin and promoting glucose uptake. The insulin sensitizing function in adipose tissue is mediated by interaction with ADGRF5/GPR116 and activation of cAMP signaling. The protein is Fibronectin type III domain-containing protein 4 (FNDC4) of Bos taurus (Bovine).